Reading from the N-terminus, the 545-residue chain is Chaperonin GroEL (545 aa).

Residues 29-32, Lys50, 86-90, Gly414, 477-479, and Asp493 each bind ATP; these read TMGP, DGTTT, and DAA.

This sequence belongs to the chaperonin (HSP60) family. As to quaternary structure, forms a cylinder of 14 subunits composed of two heptameric rings stacked back-to-back. Interacts with the co-chaperonin GroES.

The protein localises to the cytoplasm. It carries out the reaction ATP + H2O + a folded polypeptide = ADP + phosphate + an unfolded polypeptide.. Functionally, together with its co-chaperonin GroES, plays an essential role in assisting protein folding. The GroEL-GroES system forms a nano-cage that allows encapsulation of the non-native substrate proteins and provides a physical environment optimized to promote and accelerate protein folding. The sequence is that of Chaperonin GroEL from Campylobacter lari (strain RM2100 / D67 / ATCC BAA-1060).